A 625-amino-acid polypeptide reads, in one-letter code: Acetolactate synthase (625 aa).

The interval 1–29 (MSAPTKPHARPQGAGNSVPNTVKPATQFP) is disordered. Residues 14–29 (AGNSVPNTVKPATQFP) are compositionally biased toward polar residues. Glu92 is a binding site for thiamine diphosphate. Residues Arg194, 300-321 (HGTV…LGTR), and 343-362 (DIDP…IVGD) contribute to the FAD site. The tract at residues 436–516 (QHQMWAAQFI…IKVALINNGN (81 aa)) is thiamine pyrophosphate binding. Positions 487 and 514 each coordinate Mg(2+).

This sequence belongs to the TPP enzyme family. Mg(2+) is required as a cofactor. Thiamine diphosphate serves as cofactor.

The enzyme catalyses 2 pyruvate + H(+) = (2S)-2-acetolactate + CO2. The protein operates within amino-acid biosynthesis; L-isoleucine biosynthesis; L-isoleucine from 2-oxobutanoate: step 1/4. It functions in the pathway amino-acid biosynthesis; L-valine biosynthesis; L-valine from pyruvate: step 1/4. The protein is Acetolactate synthase (ilvB) of Mycobacterium leprae (strain TN).